The following is a 492-amino-acid chain: N-succinylglutamate 5-semialdehyde dehydrogenase (492 aa).

Position 220 to 225 (220 to 225 (GSANTG)) interacts with NAD(+). Active-site residues include Glu243 and Cys277.

Belongs to the aldehyde dehydrogenase family. AstD subfamily.

It catalyses the reaction N-succinyl-L-glutamate 5-semialdehyde + NAD(+) + H2O = N-succinyl-L-glutamate + NADH + 2 H(+). Its pathway is amino-acid degradation; L-arginine degradation via AST pathway; L-glutamate and succinate from L-arginine: step 4/5. Catalyzes the NAD-dependent reduction of succinylglutamate semialdehyde into succinylglutamate. This Escherichia coli (strain 55989 / EAEC) protein is N-succinylglutamate 5-semialdehyde dehydrogenase.